The primary structure comprises 217 residues: Adenylate kinase (217 aa).

Position 10-15 (10-15) interacts with ATP; it reads GAGKGT. The NMP stretch occupies residues 30 to 59; it reads STGDMLRAAIREGTELGLKAKSVMESGGLV. Residues threonine 31, arginine 36, 57–59, 85–88, and glutamine 92 each bind AMP; these read GLV and GFPR. An LID region spans residues 122-159; sequence GRRQHPASGRVYHVVYNPPKVEGKDDETGEDLVQRPDD. Residues arginine 123 and 132 to 133 contribute to the ATP site; that span reads VY. Residues arginine 156 and arginine 167 each contribute to the AMP site. ATP is bound at residue arginine 202.

Belongs to the adenylate kinase family. As to quaternary structure, monomer.

It localises to the cytoplasm. The enzyme catalyses AMP + ATP = 2 ADP. It functions in the pathway purine metabolism; AMP biosynthesis via salvage pathway; AMP from ADP: step 1/1. In terms of biological role, catalyzes the reversible transfer of the terminal phosphate group between ATP and AMP. Plays an important role in cellular energy homeostasis and in adenine nucleotide metabolism. The polypeptide is Adenylate kinase (Acinetobacter baumannii (strain AB307-0294)).